A 462-amino-acid polypeptide reads, in one-letter code: Putative zinc metalloprotease RSc1411 (462 aa).

A helical transmembrane segment spans residues 1 to 21 (MLTVLAFVFAIAVLIVVHELG). Residue histidine 18 participates in Zn(2+) binding. Glutamate 19 is an active-site residue. Histidine 22 serves as a coordination point for Zn(2+). The chain crosses the membrane as a helical span at residues 102–124 (FAIVAAGPVFNFLLAIALYALLA). The PDZ domain maps to 201–283 (TVRLRELPSA…MPEQNASIDI (83 aa)). Helical transmembrane passes span 386-406 (FVAF…LPVP) and 430-450 (WQAV…SLAL).

This sequence belongs to the peptidase M50B family. Zn(2+) serves as cofactor.

The protein localises to the cell inner membrane. This Ralstonia nicotianae (strain ATCC BAA-1114 / GMI1000) (Ralstonia solanacearum) protein is Putative zinc metalloprotease RSc1411.